Consider the following 317-residue polypeptide: Melanocyte-stimulating hormone receptor (317 aa).

At 1-37 (MPMQGAQRKLLGSLNSTPTATSNLGLAANHTGAPCLE) the chain is on the extracellular side. N29 is a glycosylation site (N-linked (GlcNAc...) asparagine). Residues 38 to 63 (VSIPDGLFLSLGLVSLVENVLVVAAV) traverse the membrane as a helical segment. The Cytoplasmic segment spans residues 64 to 72 (AKNRNLHSS). The helical transmembrane segment at 73–93 (MYCFICCLALSDLLVSGSNML) threads the bilayer. The Extracellular portion of the chain corresponds to 94–118 (ETAVILLLETGALATRTSVVQQLHN). A helical membrane pass occupies residues 119–140 (TINVLTCSSMLCSLCFLGAIAV). The Cytoplasmic segment spans residues 141 to 163 (DRYISIFYALRYHSIMTLPRAQR). Residues 164-183 (AIAAIWVASVLSSTLFITYY) form a helical membrane-spanning segment. At 184–191 (DHAAVLLC) the chain is on the extracellular side. A helical transmembrane segment spans residues 192 to 211 (LVVFFLAMLVLMAVLYVHML). At 212-240 (ARACQHAHGIIRLHKRQTPAHQGFGLRGA) the chain is on the cytoplasmic side. A helical membrane pass occupies residues 241 to 266 (ATLTILLGIFFLCWGPFFLHLTLVVF). Topologically, residues 267–279 (CPQHLTCSCIFKN) are extracellular. A helical transmembrane segment spans residues 280–300 (FKVFLTLIICNTIIDPLIYAF). At 301-317 (RSQELRRTLKEVLLCSW) the chain is on the cytoplasmic side. A lipid anchor (S-palmitoyl cysteine) is attached at C315.

Belongs to the G-protein coupled receptor 1 family. Interacts with MGRN1, but does not undergo MGRN1-mediated ubiquitination; this interaction competes with GNAS-binding and thus inhibits agonist-induced cAMP production. Interacts with OPN3; the interaction results in a decrease in MC1R-mediated cAMP signaling and ultimately a decrease in melanin production in melanocytes.

It is found in the cell membrane. In terms of biological role, receptor for MSH (alpha, beta and gamma) and ACTH. The activity of this receptor is mediated by G proteins which activate adenylate cyclase. Mediates melanogenesis, the production of eumelanin (black/brown) and phaeomelanin (red/yellow), via regulation of cAMP signaling in melanocytes. This chain is Melanocyte-stimulating hormone receptor (MC1R), found in Saguinus oedipus (Cotton-top tamarin).